Here is a 538-residue protein sequence, read N- to C-terminus: Histone-arginine methyltransferase CARMER (538 aa).

The region spanning 148 to 457 (ASQYFQFYGY…QSYDVTIDLH (310 aa)) is the SAM-dependent MTase PRMT-type domain. Positions 161, 170, 194, 216, 245, and 273 each coordinate S-adenosyl-L-methionine. The residue at position 508 (Arg508) is an Asymmetric dimethylarginine; by autocatalysis.

The protein belongs to the class I-like SAM-binding methyltransferase superfamily. Protein arginine N-methyltransferase family. In terms of assembly, homodimer. Post-translationally, the dimethylated protein is the major form.

Its subcellular location is the cytoplasm. It localises to the nucleus. It carries out the reaction L-arginyl-[protein] + 2 S-adenosyl-L-methionine = N(omega),N(omega)-dimethyl-L-arginyl-[protein] + 2 S-adenosyl-L-homocysteine + 2 H(+). Functionally, methylates (mono- and asymmetric dimethylation) the guanidino nitrogens of arginyl residues in proteins. May methylate histone H3 at 'Arg-17' and activate transcription via chromatin remodeling. This chain is Histone-arginine methyltransferase CARMER (Art4), found in Drosophila virilis (Fruit fly).